A 492-amino-acid polypeptide reads, in one-letter code: Cytochrome P450 2A1 (492 aa).

Serine 130 bears the Phosphoserine mark. Cysteine 437 is a binding site for heme.

This sequence belongs to the cytochrome P450 family. The cofactor is heme. Liver and testis.

It localises to the endoplasmic reticulum membrane. The protein localises to the microsome membrane. It catalyses the reaction an organic molecule + reduced [NADPH--hemoprotein reductase] + O2 = an alcohol + oxidized [NADPH--hemoprotein reductase] + H2O + H(+). Highly active in the 7-alpha-hydroxylation of testosterone, progesterone and androstenedione. The sequence is that of Cytochrome P450 2A1 (Cyp2a1) from Rattus norvegicus (Rat).